We begin with the raw amino-acid sequence, 327 residues long: Aspartate--ammonia ligase (327 aa).

The protein belongs to the class-II aminoacyl-tRNA synthetase family. AsnA subfamily.

Its subcellular location is the cytoplasm. The enzyme catalyses L-aspartate + NH4(+) + ATP = L-asparagine + AMP + diphosphate + H(+). It participates in amino-acid biosynthesis; L-asparagine biosynthesis; L-asparagine from L-aspartate (ammonia route): step 1/1. The sequence is that of Aspartate--ammonia ligase from Bacillus cereus (strain AH187).